We begin with the raw amino-acid sequence, 111 residues long: uncharacterized protein (111 aa).

In terms of assembly, homodimer, or homotetramer.

This is an uncharacterized protein from Bacillus subtilis (strain 168).